A 136-amino-acid polypeptide reads, in one-letter code: MQPISPDGSLSPWEPGMFSLAVYAVLVAAFVAVQLFVAWWLGERKPGVEKARPYECGIIPTGSARLRYPVPFYLVAIFFLIFDMEGAYILTWAVAFEELGWAGWLQMSFFIGLLLVGLVYVWKKGGLDWRPSYGKK.

A run of 3 helical transmembrane segments spans residues Leu-20–Trp-40, Val-70–Leu-90, and Leu-99–Val-119.

This sequence belongs to the complex I subunit 3 family. In terms of assembly, NDH-1 is composed of 14 different subunits. Subunits NuoA, H, J, K, L, M, N constitute the membrane sector of the complex.

It is found in the cell inner membrane. It catalyses the reaction a quinone + NADH + 5 H(+)(in) = a quinol + NAD(+) + 4 H(+)(out). NDH-1 shuttles electrons from NADH, via FMN and iron-sulfur (Fe-S) centers, to quinones in the respiratory chain. The immediate electron acceptor for the enzyme in this species is believed to be ubiquinone. Couples the redox reaction to proton translocation (for every two electrons transferred, four hydrogen ions are translocated across the cytoplasmic membrane), and thus conserves the redox energy in a proton gradient. This is NADH-quinone oxidoreductase subunit A from Syntrophobacter fumaroxidans (strain DSM 10017 / MPOB).